A 587-amino-acid chain; its full sequence is Pescadillo homolog (587 aa).

Positions 267–306 (LKKKEEKNDEEGKNLSKKELNKAIKADQEQQENDEQDNNN) form a coiled coil. A disordered region spans residues 290–311 (IKADQEQQENDEQDNNNGESVE). The span at 295 to 311 (EQQENDEQDNNNGESVE) shows a compositional bias: acidic residues. A BRCT domain is found at 335–434 (STAELFSKFI…ELINVNEYAA (100 aa)). The segment at 437–587 (TLPPHLSPWG…KKKEQLKKLN (151 aa)) is disordered. Over residues 459-494 (KEDGEAEEDTDEEEEEVEIEDGDEDQEDEEEEEDED) the composition is skewed to acidic residues. Positions 470-587 (EEEEEVEIED…KKKEQLKKLN (118 aa)) form a coiled coil. Composition is skewed to basic and acidic residues over residues 529 to 541 (SNKE…ELKK), 559 to 569 (IEKKENREKQL), and 578 to 587 (KKKEQLKKLN).

This sequence belongs to the pescadillo family. Component of the NOP7 complex, composed of ERB1, NOP7 and YTM1. The complex is held together by ERB1, which interacts with NOP7 via its N-terminal domain and with YTM1 via a high-affinity interaction between the seven-bladed beta-propeller domains of the 2 proteins. The NOP7 complex associates with the 66S pre-ribosome.

The protein localises to the nucleus. It localises to the nucleolus. The protein resides in the nucleoplasm. Its function is as follows. Component of the NOP7 complex, which is required for maturation of the 25S and 5.8S ribosomal RNAs and formation of the 60S ribosome. Required for the transition from hyphal to yeast growth. The protein is Pescadillo homolog of Candida albicans (strain SC5314 / ATCC MYA-2876) (Yeast).